We begin with the raw amino-acid sequence, 914 residues long: Transcription factor AZF1 (914 aa).

Disordered regions lie at residues 1-63, 93-124, and 138-275; these read MPPP…ESIS, STGG…SQIG, and QQLQ…NSNQ. The span at 13 to 34 shows a compositional bias: polar residues; it reads QAGQNESQNQSSGEAGEQNQEH. A compositionally biased stretch (low complexity) spans 44–56; the sequence is QSQPASSQPQHQQ. Ser-61 carries the post-translational modification Phosphoserine. A compositionally biased stretch (polar residues) spans 107–116; it reads PRLSTSSTHQ. Positions 136-158 are polyglutamine domain; it reads QQQQLQNQHRQQQQQQQQQSHQQ. Positions 138 to 158 are enriched in low complexity; it reads QQLQNQHRQQQQQQQQQSHQQ. A compositionally biased stretch (polar residues) spans 164-194; it reads PSFSTGLTGSSSQYQFLPRNDNTSQPPSKRN. 2 stretches are compositionally biased toward low complexity: residues 206–222 and 245–275; these read FEFF…FQPS and SNGT…NSNQ. Ser-286 and Ser-325 each carry phosphoserine. Residues 326–415 form a disordered region; it reads LSVNNKANGD…STDTTSNSRK (90 aa). Residues 359-390 are compositionally biased toward low complexity; it reads DSSNNNNNNNNNNNNENNNDNNNDNNDNSINS. A polyasparagine domain region spans residues 362–386; sequence NNNNNNNNNNNNENNNDNNNDNNDN. Over residues 391–412 the composition is skewed to polar residues; sequence ATSTNIPNQEDHSLASTDTTSN. C2H2-type zinc fingers lie at residues 593–615, 621–643, 649–671, and 677–702; these read HECP…VRSH, FVCD…ERLH, YSCD…LVTH, and FVCK…NRFH. 2 disordered regions span residues 743 to 812 and 853 to 877; these read GIKG…SPTQ and RLGS…APGV. The span at 754–770 shows a compositional bias: polar residues; that stretch reads KKSTISSPENHPASTIL. Low complexity-rich tracts occupy residues 771 to 782, 796 to 809, and 856 to 868; these read NPNTNANNAIAN, SSSN…SMIS, and SSSS…NNSN.

The protein resides in the nucleus. It is found in the cytoplasm. The protein localises to the cytosol. In terms of biological role, transcription factor involved in the diauxic shift. In the presence of glucose, activates carbon and energy metabolism genes, and in te presence of glycerol-lactate, activates genes needed for cell wall maintenance. Binds to DNA elements with the sequence AAAAGAAA (A4GA3), a motif enriched in the promoters of AZF1-sensitive genes. Required for glucose induction of CLN3 transcription. Also required for proper FLO11 expression. May also function as a corepressor. As an intrinsically disordered protein, AZF1 is capable of forming the prion [AZF1+] that confers resistance to the drug radicicol in a gain-of-function manner but decreases the expression of AZF1's target genes. This is Transcription factor AZF1 from Saccharomyces cerevisiae (strain ATCC 204508 / S288c) (Baker's yeast).